The chain runs to 476 residues: Abscisic acid 8'-hydroxylase CYP707A1 (476 aa).

A helical membrane pass occupies residues 5–25; sequence FEIFLYISMFVLGYLSYYFCF. Residue cysteine 422 coordinates heme.

The protein belongs to the cytochrome P450 family. Heme is required as a cofactor. As to expression, expressed in ovaries (specifically in ovules and placenta), sepals, petals and pedicels.

It localises to the membrane. It catalyses the reaction 2-cis-(+)-abscisate + reduced [NADPH--hemoprotein reductase] + O2 = (+)-8'-hydroxyabscisate + oxidized [NADPH--hemoprotein reductase] + H2O + H(+). The protein operates within plant hormone degradation; abscisic acid degradation. In terms of biological role, involved in the oxidative degradation of abscisic acid, especially in pollinated ovaries. The chain is Abscisic acid 8'-hydroxylase CYP707A1 from Solanum lycopersicum (Tomato).